Here is a 670-residue protein sequence, read N- to C-terminus: Alpha-1,4-glucan:maltose-1-phosphate maltosyltransferase (670 aa).

Alpha-maltose 1-phosphate is bound by residues Lys262, Gln322, and Asp357. The Nucleophile role is filled by Asp393. Position 394 (Asn394) interacts with alpha-maltose 1-phosphate. The Proton donor role is filled by Glu422. Residue 534 to 535 coordinates alpha-maltose 1-phosphate; it reads KY.

Belongs to the glycosyl hydrolase 13 family. GlgE subfamily. In terms of assembly, homodimer.

It carries out the reaction alpha-maltose 1-phosphate + [(1-&gt;4)-alpha-D-glucosyl](n) = [(1-&gt;4)-alpha-D-glucosyl](n+2) + phosphate. Functionally, maltosyltransferase that uses maltose 1-phosphate (M1P) as the sugar donor to elongate linear or branched alpha-(1-&gt;4)-glucans. Is involved in a branched alpha-glucan biosynthetic pathway from trehalose, together with TreS, Mak and GlgB. This is Alpha-1,4-glucan:maltose-1-phosphate maltosyltransferase from Chlorobaculum tepidum (strain ATCC 49652 / DSM 12025 / NBRC 103806 / TLS) (Chlorobium tepidum).